Reading from the N-terminus, the 100-residue chain is NAD(P)H-quinone oxidoreductase subunit 4L, chloroplastic (100 aa).

3 consecutive transmembrane segments (helical) span residues 2-22 (ILQHILILSSFLFCLGIFGLI), 28-48 (VKILICLELIFNAVNLNLVIF), and 61-81 (LFGLFIIAIAAAEAAIALAIL).

Belongs to the complex I subunit 4L family. As to quaternary structure, NDH is composed of at least 16 different subunits, 5 of which are encoded in the nucleus.

The protein localises to the plastid. It is found in the chloroplast thylakoid membrane. The enzyme catalyses a plastoquinone + NADH + (n+1) H(+)(in) = a plastoquinol + NAD(+) + n H(+)(out). It carries out the reaction a plastoquinone + NADPH + (n+1) H(+)(in) = a plastoquinol + NADP(+) + n H(+)(out). NDH shuttles electrons from NAD(P)H:plastoquinone, via FMN and iron-sulfur (Fe-S) centers, to quinones in the photosynthetic chain and possibly in a chloroplast respiratory chain. The immediate electron acceptor for the enzyme in this species is believed to be plastoquinone. Couples the redox reaction to proton translocation, and thus conserves the redox energy in a proton gradient. The chain is NAD(P)H-quinone oxidoreductase subunit 4L, chloroplastic from Chara vulgaris (Common stonewort).